Consider the following 468-residue polypeptide: MRISQLEGKTVALWGWGREGRAAYRALRTRLPTQALTVFCNAEEAREIDALEDAALQVETAASAQALGRFEIVVKSPGISPYRAEALVAAAQGTCFIGGTALWFAEHAQADGSVPGVICVTGTKGKSTTTALLAHLLRAAGHRTALVGNIGQPLLEVLAPQPPPAYWAIELSSYQTGDVGRSGARPELALVLNLFPEHLDWHGDEARYVRDKLSLVTEGRPRIALLNAADPLLAGLQLPDSQVRWFNHSAGWHLRGDVVYRGEQAIFDTADVPLPGEHNRRNLCAVLAAVEALGLDAAALAPAAASFRPLPNRLQLLGSVDGISYVNDSISTTPHASLAALACFAQRRVALLVGGHDRGLDWHDFAQQMARQAPLEIVTMGANGPRIHALLAPLAEAGHFGLHAANDLEHAMGLARAALGQQGGVVLLSPGAPSFGAYSDYVARGRHFAQLAGFDPAAISAIDGLGVH.

122–128 (GTKGKST) lines the ATP pocket.

Belongs to the MurCDEF family. MurD2 subfamily.

It localises to the cytoplasm. The catalysed reaction is UDP-N-acetyl-alpha-D-muramoyl-L-alanine + L-glutamate + ATP = UDP-N-acetyl-alpha-D-muramoyl-L-alanyl-L-glutamate + ADP + phosphate + H(+). Its pathway is cell wall biogenesis; peptidoglycan biosynthesis. In terms of biological role, cell wall formation. Catalyzes the addition of L-glutamate to the nucleotide precursor UDP-N-acetylmuramoyl-L-alanine. This Xanthomonas euvesicatoria pv. vesicatoria (strain 85-10) (Xanthomonas campestris pv. vesicatoria) protein is UDP-N-acetylmuramoyl-L-alanine--L-glutamate ligase.